A 567-amino-acid chain; its full sequence is Beta-galactoside-specific lectin 2 (567 aa).

The first 33 residues, 1–33 (MNARLASSRAWVWCFLMVGLVCGATAKAESKIN), serve as a signal peptide directing secretion. Asn-145 carries N-linked (GlcNAc...) asparagine glycosylation. Glu-198 is an active-site residue. Cystine bridges form between Cys-280-Cys-306 and Cys-322-Cys-341. Positions 288 to 301 (DVHNWPLVIRPVMV) are cleaved as a propeptide — connecting peptide. A Ricin B-type lectin 1 domain is found at 309 to 439 (SEPTVRIVGR…DSLGQSWLAS (131 aa)). 324-326 (DVR) serves as a coordination point for D-galactose. The N-linked (GlcNAc...) asparagine glycan is linked to Asn-362. Cys-365 and Cys-382 are disulfide-bonded. Asn-440 carries an N-linked (GlcNAc...) asparagine glycan. The region spanning 443-566 (APREVTIYGF…GNPNQMWLPV (124 aa)) is the Ricin B-type lectin 2 domain. Intrachain disulfides connect Cys-456–Cys-469 and Cys-495–Cys-512. 539-541 (DVR) lines the D-galactose pocket.

This sequence belongs to the ribosome-inactivating protein family. Type 2 RIP subfamily. As to quaternary structure, disulfide-linked dimer of A and B chains.

The enzyme catalyses Endohydrolysis of the N-glycosidic bond at one specific adenosine on the 28S rRNA.. Functionally, the A chain is responsible for inhibiting protein synthesis through the catalytic inactivation of 60S ribosomal subunits by removing adenine from position 4,324 of 28S rRNA. The B chain binds to cell receptors and probably facilitates the entry into the cell of the A chain; B chains are also responsible for cell agglutination (lectin activity). The protein is Beta-galactoside-specific lectin 2 of Viscum album (European mistletoe).